The following is a 388-amino-acid chain: Phosphopentomutase (388 aa).

Mn(2+)-binding residues include aspartate 9, aspartate 283, histidine 288, aspartate 324, histidine 325, and histidine 336.

Belongs to the phosphopentomutase family. The cofactor is Mn(2+).

The protein resides in the cytoplasm. The enzyme catalyses 2-deoxy-alpha-D-ribose 1-phosphate = 2-deoxy-D-ribose 5-phosphate. The catalysed reaction is alpha-D-ribose 1-phosphate = D-ribose 5-phosphate. The protein operates within carbohydrate degradation; 2-deoxy-D-ribose 1-phosphate degradation; D-glyceraldehyde 3-phosphate and acetaldehyde from 2-deoxy-alpha-D-ribose 1-phosphate: step 1/2. Its function is as follows. Isomerase that catalyzes the conversion of deoxy-ribose 1-phosphate (dRib-1-P) and ribose 1-phosphate (Rib-1-P) to deoxy-ribose 5-phosphate (dRib-5-P) and ribose 5-phosphate (Rib-5-P), respectively. This Deinococcus radiodurans (strain ATCC 13939 / DSM 20539 / JCM 16871 / CCUG 27074 / LMG 4051 / NBRC 15346 / NCIMB 9279 / VKM B-1422 / R1) protein is Phosphopentomutase.